Consider the following 331-residue polypeptide: Methionyl-tRNA formyltransferase (331 aa).

Ser111–Pro114 contacts (6S)-5,6,7,8-tetrahydrofolate.

The protein belongs to the Fmt family.

The catalysed reaction is L-methionyl-tRNA(fMet) + (6R)-10-formyltetrahydrofolate = N-formyl-L-methionyl-tRNA(fMet) + (6S)-5,6,7,8-tetrahydrofolate + H(+). Functionally, attaches a formyl group to the free amino group of methionyl-tRNA(fMet). The formyl group appears to play a dual role in the initiator identity of N-formylmethionyl-tRNA by promoting its recognition by IF2 and preventing the misappropriation of this tRNA by the elongation apparatus. This is Methionyl-tRNA formyltransferase from Thermosynechococcus vestitus (strain NIES-2133 / IAM M-273 / BP-1).